We begin with the raw amino-acid sequence, 348 residues long: Fe(3+) ions import ATP-binding protein FbpC (348 aa).

The region spanning 6-236 is the ABC transporter domain; the sequence is LSLEGATVRF…PADAFVARFL (231 aa). Residue 38–45 participates in ATP binding; sequence GPSGSGKS.

Belongs to the ABC transporter superfamily. Fe(3+) ion importer (TC 3.A.1.10) family. As to quaternary structure, the complex is composed of two ATP-binding proteins (FbpC), two transmembrane proteins (FbpB) and a solute-binding protein (FbpA).

The protein localises to the cell membrane. It catalyses the reaction Fe(3+)(out) + ATP + H2O = Fe(3+)(in) + ADP + phosphate + H(+). In terms of biological role, part of the ABC transporter complex FbpABC involved in Fe(3+) ions import. Responsible for energy coupling to the transport system. The sequence is that of Fe(3+) ions import ATP-binding protein FbpC from Streptomyces coelicolor (strain ATCC BAA-471 / A3(2) / M145).